The primary structure comprises 38 residues: Potassium channel toxin alpha-KTx 3.2 (38 aa).

3 disulfide bridges follow: C8–C28, C14–C33, and C18–C35.

Belongs to the short scorpion toxin superfamily. Potassium channel inhibitor family. Alpha-KTx 03 subfamily. In terms of tissue distribution, expressed by the venom gland.

Its subcellular location is the secreted. Potent inhibitor of the Shaker potassium channels and its mammalian homologs (Kv1.1/KCNA1, Kv1.3/KCNA3, Kv1.6/KCNA6) (Ki&lt;1 nM for all channels). Also blocks Kv1.2/KCNA2 (IC(50)=26.8 nM). It also shows a weak interaction with nicotinic acetylcholine receptors (nAChR), suggesting it may weakly inhibit it. This is Potassium channel toxin alpha-KTx 3.2 from Leiurus hebraeus (Hebrew deathstalker scorpion).